Reading from the N-terminus, the 84-residue chain is U4-theraphotoxin-Hhn1ac (84 aa).

Positions 1 to 22 (MKVTLIAILTCAAVLVLHTTAA) are cleaved as a signal peptide. Positions 23–47 (EELEESQLMEVGMPDTELAAVDEER) are excised as a propeptide. Cystine bridges form between cysteine 51–cysteine 65, cysteine 55–cysteine 76, and cysteine 70–cysteine 81.

Belongs to the neurotoxin 12 (Hwtx-2) family. 02 (Hwtx-2) subfamily. As to expression, expressed by the venom gland.

Its subcellular location is the secreted. In terms of biological role, postsynaptic neurotoxin. The protein is U4-theraphotoxin-Hhn1ac of Cyriopagopus hainanus (Chinese bird spider).